The primary structure comprises 297 residues: MKKAIFGAMTALITPFKNGKLDEAGYEKLIKRQIKNGIDAIVPVGTTGESATLTHDEHRICIEIAVETCKNTKVKVLAGAGSNATHEAVDLAEFAEAHGADGILSVAPYYNKPTQEGLYLHYKNIANSVKIPVLLYNVPGRTGCDILPETVIRLFNDCENIYGVKEASGSIDRCVDLLAHEPKLYVLSGEDAINYPILSNGGKGVISVTSNLLPDQTAALTHYALDNEFLKAKEINDRLYNINKIMFCESNPIPIKAAMFIAGLIDTLEYRLPLCNPSVDNLKKIEETMKSYDIKGF.

Thr-47 contributes to the pyruvate binding site. Tyr-136 acts as the Proton donor/acceptor in catalysis. Lys-165 (schiff-base intermediate with substrate) is an active-site residue. Residue Ile-206 coordinates pyruvate.

It belongs to the DapA family. In terms of assembly, homotetramer; dimer of dimers.

The protein resides in the cytoplasm. It catalyses the reaction L-aspartate 4-semialdehyde + pyruvate = (2S,4S)-4-hydroxy-2,3,4,5-tetrahydrodipicolinate + H2O + H(+). It functions in the pathway amino-acid biosynthesis; L-lysine biosynthesis via DAP pathway; (S)-tetrahydrodipicolinate from L-aspartate: step 3/4. In terms of biological role, catalyzes the condensation of (S)-aspartate-beta-semialdehyde [(S)-ASA] and pyruvate to 4-hydroxy-tetrahydrodipicolinate (HTPA). In Campylobacter fetus subsp. fetus (strain 82-40), this protein is 4-hydroxy-tetrahydrodipicolinate synthase.